The following is a 299-amino-acid chain: dTDP-4-dehydrorhamnose reductase (299 aa).

NADH is bound by residues 10-12 (GQV), aspartate 30, 39-40 (DF), and 63-65 (AHT). Residue 11–12 (QV) participates in NADPH binding. NADPH is bound by residues 39–40 (DF), 63–65 (AHT), and tyrosine 102. Residue 104-105 (TD) coordinates dTDP-beta-L-rhamnose. Residues tyrosine 128 and lysine 132 each contribute to the NADH site. NADPH-binding residues include tyrosine 128 and lysine 132. Tyrosine 128 acts as the Proton donor/acceptor in catalysis. Tryptophan 153 is a binding site for dTDP-beta-L-rhamnose.

Belongs to the dTDP-4-dehydrorhamnose reductase family. Homodimer. Requires Mg(2+) as cofactor.

The enzyme catalyses dTDP-beta-L-rhamnose + NADP(+) = dTDP-4-dehydro-beta-L-rhamnose + NADPH + H(+). It participates in carbohydrate biosynthesis; dTDP-L-rhamnose biosynthesis. It functions in the pathway bacterial outer membrane biogenesis; LPS O-antigen biosynthesis. Its function is as follows. Involved in the biosynthesis of the dTDP-L-rhamnose which is an important component of lipopolysaccharide (LPS). Catalyzes the reduction of dTDP-6-deoxy-L-lyxo-4-hexulose to yield dTDP-L-rhamnose. RmlD uses NADH and NADPH nearly equally well. This is dTDP-4-dehydrorhamnose reductase (rfbD) from Salmonella typhimurium (strain LT2 / SGSC1412 / ATCC 700720).